The chain runs to 473 residues: Tubulin gamma chain (473 aa).

The tract at residues 33-56 (TDGLSQLPDSSTERDDDTKPFFRE) is disordered. The span at 43–56 (STERDDDTKPFFRE) shows a compositional bias: basic and acidic residues. 143-149 (AGGTGSG) lines the GTP pocket.

This sequence belongs to the tubulin family. As to quaternary structure, interacts with SPC72, SPC97 and SPC98.

The protein localises to the cytoplasm. It localises to the cytoskeleton. The protein resides in the microtubule organizing center. It is found in the spindle pole body. In terms of biological role, tubulin is the major constituent of microtubules. The gamma chain is found at microtubule organizing centers (MTOC) such as the spindle poles or the centrosome, suggesting that it is involved in the minus-end nucleation of microtubule assembly. TUB4 is an important spindle pole body component that organizes both cytoplasmic and nuclear microtubule arrays. In Saccharomyces cerevisiae (strain ATCC 204508 / S288c) (Baker's yeast), this protein is Tubulin gamma chain (TUB4).